The following is a 356-amino-acid chain: uncharacterized protein (356 aa).

The signal sequence occupies residues 1 to 21 (MHWSRFVGIFLVFSVFSLVNC). The segment at 293 to 317 (RPETDYEGANLPNIPSKKGSANQPV) is disordered.

This is an uncharacterized protein from Acanthamoeba polyphaga mimivirus (APMV).